Consider the following 193-residue polypeptide: Transmembrane protein 276 (193 aa).

The N-terminal stretch at methionine 1 to alanine 32 is a signal peptide. The next 4 membrane-spanning stretches (helical) occupy residues glycine 35–leucine 55, alanine 63–valine 83, serine 89–alanine 109, and valine 114–threonine 134.

It is found in the membrane. In Bos taurus (Bovine), this protein is Transmembrane protein 276.